Consider the following 130-residue polypeptide: MAIWQGRSLKKPSGGRIVLARKKRKRELGREPANTRVAEEREKRKIIRTYGGNRKVRLVEALYANVFEGGKGRKVKILNVVENPANRQYARRNIITKGAIIETEIGKAVVTSRPGQDGVVNAVLLKEENA.

It belongs to the eukaryotic ribosomal protein eS8 family. Part of the 30S ribosomal subunit.

In Thermococcus gammatolerans (strain DSM 15229 / JCM 11827 / EJ3), this protein is Small ribosomal subunit protein eS8.